Reading from the N-terminus, the 264-residue chain is Hemin import ATP-binding protein HmuV (264 aa).

The ABC transporter domain occupies 10-246 (LQAQNLSYSI…HTLRKWYQAD (237 aa)). 42–49 (GPNGAGKS) contributes to the ATP binding site.

Belongs to the ABC transporter superfamily. Heme (hemin) importer (TC 3.A.1.14.5) family. The complex is composed of two ATP-binding proteins (HmuV), two transmembrane proteins (HmuU) and a solute-binding protein (HmuT).

It localises to the cell inner membrane. Part of the ABC transporter complex HmuTUV involved in hemin import. Responsible for energy coupling to the transport system. The chain is Hemin import ATP-binding protein HmuV from Photorhabdus laumondii subsp. laumondii (strain DSM 15139 / CIP 105565 / TT01) (Photorhabdus luminescens subsp. laumondii).